A 581-amino-acid chain; its full sequence is NADH-quinone oxidoreductase subunit C/D (581 aa).

Residues 1 to 172 (MSAVELVNEL…PPFVMTAARF (172 aa)) are NADH dehydrogenase I subunit C. Positions 196-581 (ELMILNYGPH…IDYVMSDVDR (386 aa)) are NADH dehydrogenase I subunit D.

This sequence in the N-terminal section; belongs to the complex I 30 kDa subunit family. It in the C-terminal section; belongs to the complex I 49 kDa subunit family. In terms of assembly, NDH-1 is composed of 13 different subunits. Subunits NuoB, CD, E, F, and G constitute the peripheral sector of the complex.

The protein resides in the cell inner membrane. It carries out the reaction a quinone + NADH + 5 H(+)(in) = a quinol + NAD(+) + 4 H(+)(out). Its function is as follows. NDH-1 shuttles electrons from NADH, via FMN and iron-sulfur (Fe-S) centers, to quinones in the respiratory chain. The immediate electron acceptor for the enzyme in this species is believed to be ubiquinone. Couples the redox reaction to proton translocation (for every two electrons transferred, four hydrogen ions are translocated across the cytoplasmic membrane), and thus conserves the redox energy in a proton gradient. The protein is NADH-quinone oxidoreductase subunit C/D of Rhodopseudomonas palustris (strain BisB18).